The chain runs to 359 residues: Oxopyrrolidines biosynthesis cluster protein G (359 aa).

A disordered region spans residues 1–32 (MDHLRDSLLSSLPRDSPSIGAMDYARRDREST). Positions 7-18 (SLLSSLPRDSPS) are enriched in low complexity.

Functionally, part of the gene cluster that mediates the biosynthesis of oxopyrrolidines, polyketide-amino acid hybrid compounds with feature structures of tetramic acid. Does not seem to play a role in oxopyrrolidines A and B biosynthesis. The sequence is that of Oxopyrrolidines biosynthesis cluster protein G from Penicillium oxalicum (strain 114-2 / CGMCC 5302) (Penicillium decumbens).